We begin with the raw amino-acid sequence, 335 residues long: NmrA-like family domain-containing oxidoreductase hkm9 (335 aa).

NADP(+) is bound by residues 12 to 17 (GATGNQ), 38 to 42 (RNPNS), 59 to 60 (DG), 80 to 82 (INS), Lys-137, and 161 to 164 (YLEN).

The protein belongs to the NmrA-type oxidoreductase family.

It participates in secondary metabolite biosynthesis. In terms of biological role, nmrA-like family domain-containing oxidoreductase; part of the gene cluster that mediates the biosynthesis of hancockiamides, an unusual new family of N-cinnamoylated piperazines. The NRPS hkm10 and the NmrA-like reductase hkm9 are proposed to convert two molecules of L-Phe to the intermediary piperazine called xenocockiamide A. Xenocockiamide A is then converted to hancockiamide D via a series of hydroxylations and O-methylations. The tyrosinase hkm6 may catalyze an aromatic hydroxylation, then the 2-oxoglutarate-dependent Fe(II) dioxygenase hkm4 and the FAD-dependent phenol hydroxylase hkm7 may catalyze consecutive hydroxylations to install 2 more hydroxy groups, and the methyltransferase hkm8 probably catalyzes two methylations using 2 molecules of S-adenosyl-L-methionine (SAM). The NRPS hkm11 activates and transfers trans-cinnamate supplied by the PAL hkm12 to hancockiamide D and produces hancockiamide A. NRPS Hkm11 has the flexibility to tolerate the bulky hancockiamide G as a substrate and the absence of the acetyl-transferase hkm3 opens up the opportunity for hkm11 to introduce a second N-cinnamoyl moiety. The cytochrome P450 monooxygenase hkm5 catalyzes the methylenedioxy bridge formation, converting hancockiamide A into hancockiamide G. Hkm5 can also convert hancockiamide B into hancockiamide C, and hancockiamide D into hancockiamide H. The N-acetyltransferase hkm3 finally transfers an acetyl group to 1-N of piperazine, converting hancockiamide A into hancockiamide B and hancockiamide G into hancockiamide C. The chain is NmrA-like family domain-containing oxidoreductase hkm9 from Aspergillus hancockii.